Consider the following 415-residue polypeptide: tRNA(Ile)-lysidine synthase (415 aa).

36–41 (SGGRDS) provides a ligand contact to ATP.

The protein belongs to the tRNA(Ile)-lysidine synthase family.

It is found in the cytoplasm. It carries out the reaction cytidine(34) in tRNA(Ile2) + L-lysine + ATP = lysidine(34) in tRNA(Ile2) + AMP + diphosphate + H(+). Functionally, ligates lysine onto the cytidine present at position 34 of the AUA codon-specific tRNA(Ile) that contains the anticodon CAU, in an ATP-dependent manner. Cytidine is converted to lysidine, thus changing the amino acid specificity of the tRNA from methionine to isoleucine. This is tRNA(Ile)-lysidine synthase from Tropheryma whipplei (strain Twist) (Whipple's bacillus).